The sequence spans 98 residues: Cystatin-A (98 aa).

The residue at position 1 (Met-1) is an N-acetylmethionine. The short motif at 46 to 50 (QVVAG) is the Secondary area of contact element.

Belongs to the cystatin family.

It localises to the cytoplasm. Its function is as follows. This is an intracellular thiol proteinase inhibitor. The polypeptide is Cystatin-A (CSTA) (Felis catus (Cat)).